A 286-amino-acid chain; its full sequence is Translocon-associated protein subunit alpha (286 aa).

Positions 1-23 (MRVLPRLLLLLLLAFPAAVLLRG) are cleaved as a signal peptide. Topologically, residues 24–207 (GPGGSLVAAQ…EREDGLDGET (184 aa)) are lumenal. The segment covering 37 to 75 (EDEETVEDSIIEDEDDEAEVEEDEPTDLAEDKEEEDVSG) has biased composition (acidic residues). Positions 37 to 83 (EDEETVEDSIIEDEDDEAEVEEDEPTDLAEDKEEEDVSGEPEASPSA) are disordered. 2 N-linked (GlcNAc...) asparagine glycosylation sites follow: Asn-136 and Asn-191. Residues 208–228 (IFMYMFLAGLGLLVVVGLHQL) traverse the membrane as a helical segment. Residues 229–286 (LESRKRKRPIQKVEMGTSSQNDVDMSWIPQETLNQINKASPRRLPRKRAQKRSVGSDE) are Cytoplasmic-facing. Phosphoserine is present on Ser-247. Thr-260 is subject to Phosphothreonine. The tract at residues 261–286 (LNQINKASPRRLPRKRAQKRSVGSDE) is disordered. Ser-268 carries the post-translational modification Phosphoserine. The span at 268 to 279 (SPRRLPRKRAQK) shows a compositional bias: basic residues.

This sequence belongs to the TRAP-alpha family. Heterotetramer of TRAP-alpha, TRAP-beta, TRAP-delta and TRAP-gamma. Interacts with palmitoylated calnexin (CALX), the interaction is required for efficient folding of glycosylated proteins. In terms of processing, phosphorylated in its cytoplasmic tail.

It is found in the endoplasmic reticulum membrane. TRAP proteins are part of a complex whose function is to bind calcium to the ER membrane and thereby regulate the retention of ER resident proteins. May be involved in the recycling of the translocation apparatus after completion of the translocation process or may function as a membrane-bound chaperone facilitating folding of translocated proteins. The sequence is that of Translocon-associated protein subunit alpha (SSR1) from Canis lupus familiaris (Dog).